The primary structure comprises 91 residues: Small ribosomal subunit protein uS19 (91 aa).

This sequence belongs to the universal ribosomal protein uS19 family.

Protein S19 forms a complex with S13 that binds strongly to the 16S ribosomal RNA. This chain is Small ribosomal subunit protein uS19, found in Azoarcus sp. (strain BH72).